Reading from the N-terminus, the 362-residue chain is Formyltransferase/hydrolase complex Fhc subunit B (362 aa).

In terms of assembly, octaheteromer. Part of the formyltransferase/hydrolase complex fhc; composed of FhcA, FhcB, FhcC and FhcD.

Its subcellular location is the cytoplasm. Its pathway is one-carbon metabolism; formaldehyde degradation; formate from formaldehyde (H(4)MPT route): step 4/5. In terms of biological role, involved in the transformation of 5-formyl tetrahydromethanopterin (5-formyl-H(4)MPT) to methanofuran (MFR) and formate via the formylmethanofuran (formyl-MFR). The sequence is that of Formyltransferase/hydrolase complex Fhc subunit B (fhcB) from Methylorubrum extorquens (strain ATCC 14718 / DSM 1338 / JCM 2805 / NCIMB 9133 / AM1) (Methylobacterium extorquens).